The following is a 344-amino-acid chain: tRNA N6-adenosine threonylcarbamoyltransferase (344 aa).

Fe cation contacts are provided by histidine 112 and histidine 116. Substrate is bound by residues 134 to 138, aspartate 167, glycine 180, and asparagine 280; that span reads LASGG. A Fe cation-binding site is contributed by aspartate 308.

This sequence belongs to the KAE1 / TsaD family. It depends on Fe(2+) as a cofactor.

The protein localises to the cytoplasm. It catalyses the reaction L-threonylcarbamoyladenylate + adenosine(37) in tRNA = N(6)-L-threonylcarbamoyladenosine(37) in tRNA + AMP + H(+). Required for the formation of a threonylcarbamoyl group on adenosine at position 37 (t(6)A37) in tRNAs that read codons beginning with adenine. Is involved in the transfer of the threonylcarbamoyl moiety of threonylcarbamoyl-AMP (TC-AMP) to the N6 group of A37, together with TsaE and TsaB. TsaD likely plays a direct catalytic role in this reaction. The protein is tRNA N6-adenosine threonylcarbamoyltransferase of Rickettsia rickettsii (strain Iowa).